The following is a 623-amino-acid chain: Transketolase (623 aa).

Methionine 1 is modified (N-acetylmethionine). Lysine 6 and lysine 11 each carry N6-acetyllysine. Histidine 37 is a substrate binding site. 2 residues coordinate thiamine diphosphate: serine 40 and histidine 77. The residue at position 104 (serine 104) is a Phosphoserine. Glycine 123–leucine 125 contacts thiamine diphosphate. Residue lysine 144 is modified to N6-acetyllysine. Residue aspartate 155 coordinates Mg(2+). Thiamine diphosphate contacts are provided by glycine 156 and asparagine 185. 2 residues coordinate Mg(2+): asparagine 185 and leucine 187. Lysine 204, lysine 232, and lysine 241 each carry N6-acetyllysine. 2 residues coordinate thiamine diphosphate: lysine 244 and histidine 258. Histidine 258 lines the substrate pocket. Lysine 260 is modified (N6-acetyllysine). Tyrosine 275 carries the post-translational modification Phosphotyrosine. At threonine 287 the chain carries Phosphothreonine. Serine 295 carries the phosphoserine modification. Arginine 318 is a substrate binding site. A Glycyl lysine isopeptide (Lys-Gly) (interchain with G-Cter in SUMO2) cross-link involves residue lysine 352. Glutamate 366 acts as the Proton donor in catalysis. Phenylalanine 392 is a thiamine diphosphate binding site. Residues histidine 416 and aspartate 424 each coordinate substrate. Glutamine 428 contacts thiamine diphosphate. Position 474 (arginine 474) interacts with substrate. Lysine 538 and lysine 603 each carry N6-acetyllysine.

It belongs to the transketolase family. Homodimer. The cofactor is Mg(2+). Ca(2+) serves as cofactor. Requires Mn(2+) as cofactor. It depends on Co(2+) as a cofactor. Thiamine diphosphate is required as a cofactor.

The enzyme catalyses D-sedoheptulose 7-phosphate + D-glyceraldehyde 3-phosphate = aldehydo-D-ribose 5-phosphate + D-xylulose 5-phosphate. Functionally, catalyzes the transfer of a two-carbon ketol group from a ketose donor to an aldose acceptor, via a covalent intermediate with the cofactor thiamine pyrophosphate. In Pongo abelii (Sumatran orangutan), this protein is Transketolase (TKT).